Here is a 418-residue protein sequence, read N- to C-terminus: Glutamyl-tRNA reductase (418 aa).

Substrate contacts are provided by residues 49–52, S109, 114–116, and Q120; these read TCNR and EPQ. C50 (nucleophile) is an active-site residue. 189–194 is a binding site for NADP(+); sequence GAGETI.

Belongs to the glutamyl-tRNA reductase family. Homodimer.

The catalysed reaction is (S)-4-amino-5-oxopentanoate + tRNA(Glu) + NADP(+) = L-glutamyl-tRNA(Glu) + NADPH + H(+). The protein operates within porphyrin-containing compound metabolism; protoporphyrin-IX biosynthesis; 5-aminolevulinate from L-glutamyl-tRNA(Glu): step 1/2. Functionally, catalyzes the NADPH-dependent reduction of glutamyl-tRNA(Glu) to glutamate 1-semialdehyde (GSA). This Enterobacter sp. (strain 638) protein is Glutamyl-tRNA reductase.